A 305-amino-acid polypeptide reads, in one-letter code: Glycine--tRNA ligase alpha subunit (305 aa).

This sequence belongs to the class-II aminoacyl-tRNA synthetase family. In terms of assembly, tetramer of two alpha and two beta subunits.

The protein resides in the cytoplasm. The catalysed reaction is tRNA(Gly) + glycine + ATP = glycyl-tRNA(Gly) + AMP + diphosphate. This Streptococcus sanguinis (strain SK36) protein is Glycine--tRNA ligase alpha subunit.